The sequence spans 61 residues: Overexpressed in colon carcinoma 1 protein homolog (61 aa).

A compositionally biased stretch (polar residues) spans 1 to 13 (MGCGNSTAASTTP). The segment at 1-61 (MGCGNSTAAS…AGQTASTHKE (61 aa)) is disordered. Basic and acidic residues predominate over residues 18 to 34 (SAKDVQDDSSMDEEKRR). Over residues 48-61 (TNETAGQTASTHKE) the composition is skewed to polar residues.

It belongs to the OCC1 family.

The polypeptide is Overexpressed in colon carcinoma 1 protein homolog (si:dkey-261e22.4) (Danio rerio (Zebrafish)).